The sequence spans 403 residues: Dynactin subunit 2-A (403 aa).

Residues 1-26 form a disordered region; it reads MADPKYADLPGIARNEPDVYETSDLP. Residues 99-132 are a coiled coil; sequence PQQKYQRLLHEVQELTQEVEKTQSTVKESAAEEK. Residues 183-203 form a disordered region; it reads AAKTRKNPEGKSPAKGPGPDT. A coiled-coil region spans residues 381–401; it reads KENLATVEDNFSNIDGRIKKL.

The protein belongs to the dynactin subunit 2 family. In terms of assembly, subunit of dynactin, a multiprotein complex part of a tripartite complex with dynein and a adapter, such as BICDL1, BICD2 or HOOK3. The dynactin complex is built around ACTR1A/ACTB filament and consists of an actin-related filament composed of a shoulder domain, a pointed end and a barbed end. Its length is defined by its flexible shoulder domain. The soulder is composed of 2 DCTN1 subunits, 4 DCTN2 and 2 DCTN3.

It is found in the cytoplasm. It localises to the cytoskeleton. Its subcellular location is the microtubule organizing center. The protein resides in the centrosome. The protein localises to the membrane. Its function is as follows. Part of the dynactin complex that activates the molecular motor dynein for ultra-processive transport along microtubules. In the dynactin soulder domain, binds the ACTR1A filament and acts as a molecular ruler to determine the length. Modulates cytoplasmic dynein binding to an organelle, and plays a role in prometaphase chromosome alignment and spindle organization during mitosis. Involved in anchoring microtubules to centrosomes. The chain is Dynactin subunit 2-A (dctn2-a) from Xenopus laevis (African clawed frog).